An 846-amino-acid polypeptide reads, in one-letter code: Enhancer of polycomb-like protein 1 (846 aa).

Disordered regions lie at residues 169–204, 391–466, 587–609, 682–702, and 759–804; these read FNSK…KGDA, TSDE…APDA, EKKR…PKAM, AADA…PQPN, and QVQA…GVKQ. Positions 180–203 are enriched in basic and acidic residues; that stretch reads VKSDKEQGRGMRVKGKDREKEKGD. Residues 411 to 426 show a composition bias toward polar residues; that stretch reads PSLSGQTPLTSGQSSS. Over residues 432-452 the composition is skewed to basic and acidic residues; the sequence is TDKDREERAQRERYDAQRNAE. Positions 434–490 form a coiled coil; sequence KDREERAQRERYDAQRNAERSGILSGRSNAPDALKERLQALQQKTEEMLARKKEQDA. The segment covering 686–702 has biased composition (pro residues); sequence KPPPAPIFQKPPAPQPN. The segment covering 759–773 has biased composition (low complexity); the sequence is QVQAQGQGHPQAHLQ. Over residues 774 to 796 the composition is skewed to polar residues; that stretch reads THPQGVSQPNGVNSPMPNGQQML.

This sequence belongs to the enhancer of polycomb family. In terms of assembly, component of the NuA4 histone acetyltransferase complex.

It is found in the nucleus. Functionally, component of the NuA4 histone acetyltransferase complex which is involved in transcriptional activation of selected genes principally by acetylation of nucleosomal histone H4 and H2A. The NuA4 complex is also involved in DNA repair. Involved in gene silencing by neighboring heterochromatin, blockage of the silencing spreading along the chromosome, and required for cell cycle progression through G2/M. This is Enhancer of polycomb-like protein 1 (EPL1) from Cryptococcus neoformans var. neoformans serotype D (strain B-3501A) (Filobasidiella neoformans).